Reading from the N-terminus, the 303-residue chain is Glycine--tRNA ligase alpha subunit (303 aa).

It belongs to the class-II aminoacyl-tRNA synthetase family. Tetramer of two alpha and two beta subunits.

Its subcellular location is the cytoplasm. It catalyses the reaction tRNA(Gly) + glycine + ATP = glycyl-tRNA(Gly) + AMP + diphosphate. This is Glycine--tRNA ligase alpha subunit from Methylobacterium radiotolerans (strain ATCC 27329 / DSM 1819 / JCM 2831 / NBRC 15690 / NCIMB 10815 / 0-1).